Reading from the N-terminus, the 93-residue chain is uncharacterized protein (93 aa).

Helical transmembrane passes span 9–29 (ITVIGYIAGTLTTFASLPQLI), 40–60 (ISLAFVITFTTGLTLWLIYGI), and 66–86 (PIIVFNILSLMFWIPITYLKI).

The protein resides in the cell membrane. This is an uncharacterized protein from Methanocaldococcus jannaschii (strain ATCC 43067 / DSM 2661 / JAL-1 / JCM 10045 / NBRC 100440) (Methanococcus jannaschii).